The primary structure comprises 614 residues: Chaperone protein HtpG (614 aa).

The interval 1-324 is a; substrate-binding; it reads MSQIETKEFQ…SEELPLNISR (324 aa). A b region spans residues 325–537; it reads ETMQDSALIA…SHYGTHSMQR (213 aa). The tract at residues 538-614 is c; that stretch reads MMQLMNRDLQ…LNEILEKALR (77 aa).

The protein belongs to the heat shock protein 90 family. In terms of assembly, homodimer.

Its subcellular location is the cytoplasm. Functionally, molecular chaperone. Has ATPase activity. The chain is Chaperone protein HtpG from Desulfitobacterium hafniense (strain Y51).